Reading from the N-terminus, the 157-residue chain is Protein Smg homolog (157 aa).

The protein belongs to the Smg family.

This is Protein Smg homolog from Idiomarina loihiensis (strain ATCC BAA-735 / DSM 15497 / L2-TR).